The sequence spans 351 residues: Histidinol-phosphate aminotransferase (351 aa).

Lysine 215 carries the N6-(pyridoxal phosphate)lysine modification.

Belongs to the class-II pyridoxal-phosphate-dependent aminotransferase family. Histidinol-phosphate aminotransferase subfamily. It depends on pyridoxal 5'-phosphate as a cofactor.

The catalysed reaction is L-histidinol phosphate + 2-oxoglutarate = 3-(imidazol-4-yl)-2-oxopropyl phosphate + L-glutamate. It functions in the pathway amino-acid biosynthesis; L-histidine biosynthesis; L-histidine from 5-phospho-alpha-D-ribose 1-diphosphate: step 7/9. This Methanocorpusculum labreanum (strain ATCC 43576 / DSM 4855 / Z) protein is Histidinol-phosphate aminotransferase.